Reading from the N-terminus, the 216-residue chain is Acyl-homoserine-lactone synthase (216 aa).

This sequence belongs to the autoinducer synthase family.

The enzyme catalyses a fatty acyl-[ACP] + S-adenosyl-L-methionine = an N-acyl-L-homoserine lactone + S-methyl-5'-thioadenosine + holo-[ACP] + H(+). Functionally, required for the synthesis of OHHL (N-(3-oxohexanoyl)-L-homoserine lactone), an autoinducer molecule which binds to CarR and thus acts in the control of the biosynthesis of carbapenem antibiotics. The protein is Acyl-homoserine-lactone synthase (carI) of Pectobacterium carotovorum subsp. carotovorum (Erwinia carotovora subsp. carotovora).